Here is a 193-residue protein sequence, read N- to C-terminus: Achaete-scute homolog 2 (193 aa).

Disordered stretches follow at residues 1–27 (MDGGTLPRSAPPAPPVPVGCAARRRPA), 37–56 (RRRPATAETGGGAAAVARRN), and 118–177 (GGLR…GALS). The bHLH domain occupies 50–102 (AAVARRNERERNRVKLVNLGFQALRQHVPHGGASKKLSKVETLRSAVEYIRAL). Positions 140–150 (AASPSRASSSP) are enriched in low complexity.

Efficient DNA binding requires dimerization with another basic helix-loop-helix (bHLH) protein. Forms heterodimers with bHLH transcription factor TCF3. May not heterodimerise with bHLH protein HAND1. In terms of tissue distribution, expressed in the placenta at a stage between the first and second trimesters and when it matures, at about 32-36 weeks. Expressed in the extravillous trophoblasts, the intermediate trophoblasts, and at lower levels in the cytotrophoblasts and stroma of chorionic villi of the developing placenta. Expressed in follicular T-helper (Tfh) cells.

The protein resides in the nucleus. Its function is as follows. Transcription factor. Binds to E-box motifs 5'-CANNTG-3' in the regulatory elements of target genes, probably as a heterodimer with another basic helix-loop-helix (bHLH) protein such as the transcription factor TCF3. May bind both open and closed chromatin, acting as a pioneer transcription factor to allow other factors to bind and activate lineage-specific genes. Required during post-implantation development for the generation of some differentiated trophoblast cell types. Transcriptional activity of ASCL2 may be antagonised in a subset of trophoblast cells by bHLH transcription factor HAND1, perhaps by competing for dimerization with other bHLH proteins. Involved in differentiation and function of follicular T-helper (Tfh) cells, thereby playing a role in germinal center responses; probably modulates expression of genes involved in Tfh cell function, such as BCL6. May also act as a suppressor of Th1-, Th2- and Th17-cell differentiation. Induces the formation of stem cells in intestinal crypts in vitro, synergistically activating transcription of target genes, such as SOX9, together with TCF4/beta-catenin. May form a bistable transcriptional switch, controlling expression of its own gene together with Wnt/R-spondin signaling, and thereby maintaining stem cell characteristics. Modulates expression of target genes, including perhaps down-regulating EGR1/Krox24 and chemokine CXCL10/Mob-1 and up-regulating CXCR4 and CDKN1C/p57kip2, in Schwann cells. May play a role in reducing proliferation of Schwann cells, perhaps acting via modulation of expression of CDKN1C. May be dispensable for blastocyst formation and later embryonic function. May be involved in the determination of neuronal precursors. The chain is Achaete-scute homolog 2 (ASCL2) from Homo sapiens (Human).